The following is a 143-amino-acid chain: MTKAIPKIGSRRKVRIGLRRNARFSLRKSARRITKGVIHVQASFNNTIITVTDPQGRVVFWSSAGTCGFKSSRKASPYAGQRTAVDAIRTVGLQRAEVMVKGAGSGRDAALRAIAKSGVRLSCIRDVTPMPHNGCRPPKKRRL.

The protein belongs to the universal ribosomal protein uS11 family. Part of the 30S ribosomal subunit.

The protein resides in the plastid. Its subcellular location is the chloroplast. This is Small ribosomal subunit protein uS11c from Oryza nivara (Indian wild rice).